Consider the following 308-residue polypeptide: HPr kinase/phosphorylase (308 aa).

Active-site residues include histidine 136 and lysine 157. 151–158 (GESGIGKS) lines the ATP pocket. Serine 158 lines the Mg(2+) pocket. Aspartate 175 serves as the catalytic Proton acceptor; for phosphorylation activity. Proton donor; for dephosphorylation activity. The important for the catalytic mechanism of both phosphorylation and dephosphorylation stretch occupies residues 198 to 207 (IEVRGMGIID). Glutamate 199 contributes to the Mg(2+) binding site. Arginine 240 is an active-site residue. The interval 261 to 266 (PIRPGR) is important for the catalytic mechanism of dephosphorylation.

Belongs to the HPrK/P family. Homohexamer. Mg(2+) serves as cofactor.

The catalysed reaction is [HPr protein]-L-serine + ATP = [HPr protein]-O-phospho-L-serine + ADP + H(+). It carries out the reaction [HPr protein]-O-phospho-L-serine + phosphate + H(+) = [HPr protein]-L-serine + diphosphate. Functionally, catalyzes the ATP- as well as the pyrophosphate-dependent phosphorylation of a specific serine residue in HPr, a phosphocarrier protein of the phosphoenolpyruvate-dependent sugar phosphotransferase system (PTS). HprK/P also catalyzes the pyrophosphate-producing, inorganic phosphate-dependent dephosphorylation (phosphorolysis) of seryl-phosphorylated HPr (P-Ser-HPr). The two antagonistic activities of HprK/P are regulated by several intracellular metabolites, which change their concentration in response to the absence or presence of rapidly metabolisable carbon sources (glucose, fructose, etc.) in the growth medium. Therefore, by controlling the phosphorylation state of HPr, HPrK/P is a sensor enzyme that plays a major role in the regulation of carbon metabolism and sugar transport: it mediates carbon catabolite repression (CCR), and regulates PTS-catalyzed carbohydrate uptake and inducer exclusion. The protein is HPr kinase/phosphorylase of Clostridium kluyveri (strain NBRC 12016).